The sequence spans 35 residues: Cytochrome b6-f complex subunit 5 (35 aa).

Residues 5-25 (LLTGIVLGSIFITLLGLLAAA) form a helical membrane-spanning segment.

The protein belongs to the PetG family. The 4 large subunits of the cytochrome b6-f complex are cytochrome b6, subunit IV (17 kDa polypeptide, PetD), cytochrome f and the Rieske protein, while the 4 small subunits are PetG, PetL, PetM and PetN. The complex functions as a dimer.

The protein localises to the plastid. Its subcellular location is the chloroplast thylakoid membrane. Functionally, component of the cytochrome b6-f complex, which mediates electron transfer between photosystem II (PSII) and photosystem I (PSI), cyclic electron flow around PSI, and state transitions. PetG is required for either the stability or assembly of the cytochrome b6-f complex. In Cyanidium caldarium (Red alga), this protein is Cytochrome b6-f complex subunit 5.